The following is a 422-amino-acid chain: Glutamyl-tRNA reductase (422 aa).

Substrate contacts are provided by residues 48-51, Ser100, 105-107, and Gln111; these read TCNR and EDQ. Catalysis depends on Cys49, which acts as the Nucleophile. 180-185 is an NADP(+) binding site; it reads GTGEMG.

The protein belongs to the glutamyl-tRNA reductase family. Homodimer.

The enzyme catalyses (S)-4-amino-5-oxopentanoate + tRNA(Glu) + NADP(+) = L-glutamyl-tRNA(Glu) + NADPH + H(+). It functions in the pathway porphyrin-containing compound metabolism; protoporphyrin-IX biosynthesis; 5-aminolevulinate from L-glutamyl-tRNA(Glu): step 1/2. Catalyzes the NADPH-dependent reduction of glutamyl-tRNA(Glu) to glutamate 1-semialdehyde (GSA). In Methanococcoides burtonii (strain DSM 6242 / NBRC 107633 / OCM 468 / ACE-M), this protein is Glutamyl-tRNA reductase.